The following is a 729-amino-acid chain: Phosphoribosylformylglycinamidine synthase subunit PurL (729 aa).

The active site involves His54. ATP-binding residues include Tyr57 and Lys96. Glu98 is a Mg(2+) binding site. Substrate contacts are provided by residues 99-102 (SHNH) and Arg121. His100 acts as the Proton acceptor in catalysis. Asp122 serves as a coordination point for Mg(2+). Residue Gln245 coordinates substrate. Asp273 is a Mg(2+) binding site. 317-319 (ETQ) contacts substrate. ATP contacts are provided by Asp495 and Gly532. A Mg(2+)-binding site is contributed by Asn533. Ser535 contacts substrate.

This sequence belongs to the FGAMS family. As to quaternary structure, monomer. Part of the FGAM synthase complex composed of 1 PurL, 1 PurQ and 2 PurS subunits.

Its subcellular location is the cytoplasm. It catalyses the reaction N(2)-formyl-N(1)-(5-phospho-beta-D-ribosyl)glycinamide + L-glutamine + ATP + H2O = 2-formamido-N(1)-(5-O-phospho-beta-D-ribosyl)acetamidine + L-glutamate + ADP + phosphate + H(+). The protein operates within purine metabolism; IMP biosynthesis via de novo pathway; 5-amino-1-(5-phospho-D-ribosyl)imidazole from N(2)-formyl-N(1)-(5-phospho-D-ribosyl)glycinamide: step 1/2. Functionally, part of the phosphoribosylformylglycinamidine synthase complex involved in the purines biosynthetic pathway. Catalyzes the ATP-dependent conversion of formylglycinamide ribonucleotide (FGAR) and glutamine to yield formylglycinamidine ribonucleotide (FGAM) and glutamate. The FGAM synthase complex is composed of three subunits. PurQ produces an ammonia molecule by converting glutamine to glutamate. PurL transfers the ammonia molecule to FGAR to form FGAM in an ATP-dependent manner. PurS interacts with PurQ and PurL and is thought to assist in the transfer of the ammonia molecule from PurQ to PurL. In Staphylococcus aureus (strain Mu3 / ATCC 700698), this protein is Phosphoribosylformylglycinamidine synthase subunit PurL.